Here is a 217-residue protein sequence, read N- to C-terminus: tRNA (guanine-N(7)-)-methyltransferase (217 aa).

The S-adenosyl-L-methionine site is built by glutamate 43, aspartate 68, asparagine 101, and asparagine 123. Lysine 127 provides a ligand contact to substrate. The segment at 129-134 (RHNKRR) is interaction with RNA. Residues aspartate 159 and 196-199 (TEYE) contribute to the substrate site.

It belongs to the class I-like SAM-binding methyltransferase superfamily. TrmB family.

It carries out the reaction guanosine(46) in tRNA + S-adenosyl-L-methionine = N(7)-methylguanosine(46) in tRNA + S-adenosyl-L-homocysteine. It participates in tRNA modification; N(7)-methylguanine-tRNA biosynthesis. Its function is as follows. Catalyzes the formation of N(7)-methylguanine at position 46 (m7G46) in tRNA. This is tRNA (guanine-N(7)-)-methyltransferase from Clostridium botulinum (strain Langeland / NCTC 10281 / Type F).